Here is a 505-residue protein sequence, read N- to C-terminus: Glycerol kinase (505 aa).

Thr-15 is an ADP binding site. The ATP site is built by Thr-15, Thr-16, and Ser-17. Thr-15 is a binding site for sn-glycerol 3-phosphate. Arg-19 serves as a coordination point for ADP. Sn-glycerol 3-phosphate contacts are provided by Arg-85, Glu-86, Tyr-136, and Asp-249. Residues Arg-85, Glu-86, Tyr-136, Asp-249, and Gln-250 each contribute to the glycerol site. Positions 271 and 314 each coordinate ADP. ATP is bound by residues Thr-271, Gly-314, Gln-318, and Gly-415. The ADP site is built by Gly-415 and Asn-419.

It belongs to the FGGY kinase family.

The catalysed reaction is glycerol + ATP = sn-glycerol 3-phosphate + ADP + H(+). It functions in the pathway polyol metabolism; glycerol degradation via glycerol kinase pathway; sn-glycerol 3-phosphate from glycerol: step 1/1. Inhibited by fructose 1,6-bisphosphate (FBP). Its function is as follows. Key enzyme in the regulation of glycerol uptake and metabolism. Catalyzes the phosphorylation of glycerol to yield sn-glycerol 3-phosphate. The chain is Glycerol kinase from Mycoplasma capricolum subsp. capricolum (strain California kid / ATCC 27343 / NCTC 10154).